The primary structure comprises 129 residues: MAKKTRRVVKRKKKLTVDRGVVHIKSTYNNTIITLTDPDGKVITWGSGGTAGFQGTRKGTPYAAQLAADQVAKEAVKLGMKKVDILVKGPGSGREAAIRTFQAAGLEIGVIKDVTPIPFNGCRPKKKRV.

Belongs to the universal ribosomal protein uS11 family. As to quaternary structure, part of the 30S ribosomal subunit. Interacts with proteins S7 and S18. Binds to IF-3.

Its function is as follows. Located on the platform of the 30S subunit, it bridges several disparate RNA helices of the 16S rRNA. Forms part of the Shine-Dalgarno cleft in the 70S ribosome. The chain is Small ribosomal subunit protein uS11 from Thermosipho africanus (strain TCF52B).